The sequence spans 304 residues: Acetyl-coenzyme A carboxylase carboxyl transferase subunit beta (304 aa).

One can recognise a CoA carboxyltransferase N-terminal domain in the interval 25–294 (LWIKCPETGE…KAIKRDTATE (270 aa)).

Belongs to the AccD/PCCB family. Acetyl-CoA carboxylase is a heterohexamer composed of biotin carboxyl carrier protein (AccB), biotin carboxylase (AccC) and two subunits each of ACCase subunit alpha (AccA) and ACCase subunit beta (AccD).

Its subcellular location is the cytoplasm. The catalysed reaction is N(6)-carboxybiotinyl-L-lysyl-[protein] + acetyl-CoA = N(6)-biotinyl-L-lysyl-[protein] + malonyl-CoA. It functions in the pathway lipid metabolism; malonyl-CoA biosynthesis; malonyl-CoA from acetyl-CoA: step 1/1. Component of the acetyl coenzyme A carboxylase (ACC) complex. Biotin carboxylase (BC) catalyzes the carboxylation of biotin on its carrier protein (BCCP) and then the CO(2) group is transferred by the transcarboxylase to acetyl-CoA to form malonyl-CoA. This Sinorhizobium medicae (strain WSM419) (Ensifer medicae) protein is Acetyl-coenzyme A carboxylase carboxyl transferase subunit beta.